The following is a 291-amino-acid chain: Protein/nucleic acid deglycase HchA (291 aa).

Over residues 1–18 the composition is skewed to basic and acidic residues; it reads MSNERDTSRTPTPDHAEH. Positions 1-20 are disordered; the sequence is MSNERDTSRTPTPDHAEHNA. C188 serves as the catalytic Nucleophile.

Belongs to the peptidase C56 family. HchA subfamily.

The protein localises to the cytoplasm. The enzyme catalyses N(omega)-(1-hydroxy-2-oxopropyl)-L-arginyl-[protein] + H2O = lactate + L-arginyl-[protein] + H(+). It carries out the reaction N(6)-(1-hydroxy-2-oxopropyl)-L-lysyl-[protein] + H2O = lactate + L-lysyl-[protein] + H(+). The catalysed reaction is S-(1-hydroxy-2-oxopropyl)-L-cysteinyl-[protein] + H2O = lactate + L-cysteinyl-[protein] + H(+). It catalyses the reaction N(omega)-(1-hydroxy-2-oxoethyl)-L-arginyl-[protein] + H2O = L-arginyl-[protein] + glycolate + H(+). The enzyme catalyses N(6)-(1-hydroxy-2-oxoethyl)-L-lysyl-[protein] + H2O = glycolate + L-lysyl-[protein] + H(+). It carries out the reaction S-(1-hydroxy-2-oxoethyl)-L-cysteinyl-[protein] + H2O = glycolate + L-cysteinyl-[protein] + H(+). The catalysed reaction is N(2)-(1-hydroxy-2-oxopropyl)-dGTP + H2O = lactate + dGTP + H(+). It catalyses the reaction N(2)-(1-hydroxy-2-oxopropyl)-GTP + H2O = lactate + GTP + H(+). The enzyme catalyses N(2)-(1-hydroxy-2-oxopropyl)-GDP + H2O = lactate + GDP + H(+). It carries out the reaction N(2)-(1-hydroxy-2-oxopropyl)-GMP + H2O = lactate + GMP + H(+). The catalysed reaction is N(2)-(1-hydroxy-2-oxoethyl)-dGTP + H2O = dGTP + glycolate + H(+). It catalyses the reaction N(2)-(1-hydroxy-2-oxoethyl)-GTP + H2O = glycolate + GTP + H(+). The enzyme catalyses N(2)-(1-hydroxy-2-oxoethyl)-GDP + H2O = glycolate + GDP + H(+). It carries out the reaction N(2)-(1-hydroxy-2-oxoethyl)-GMP + H2O = glycolate + GMP + H(+). The catalysed reaction is an N(2)-(1-hydroxy-2-oxopropyl)-guanosine in RNA + H2O = a guanosine in RNA + lactate + H(+). It catalyses the reaction an N(2)-(1-hydroxy-2-oxopropyl)-2'-deoxyguanosine in DNA + H2O = a 2'-deoxyguanosine in DNA + lactate + H(+). The enzyme catalyses an N(2)-(1-hydroxy-2-oxoethyl)-guanosine in RNA + H2O = a guanosine in RNA + glycolate + H(+). It carries out the reaction an N(2)-(1-hydroxy-2-oxoethyl)-2'-deoxyguanosine in DNA + H2O = a 2'-deoxyguanosine in DNA + glycolate + H(+). Functionally, protein and nucleotide deglycase that catalyzes the deglycation of the Maillard adducts formed between amino groups of proteins or nucleotides and reactive carbonyl groups of glyoxals. Thus, functions as a protein deglycase that repairs methylglyoxal- and glyoxal-glycated proteins, and releases repaired proteins and lactate or glycolate, respectively. Deglycates cysteine, arginine and lysine residues in proteins, and thus reactivates these proteins by reversing glycation by glyoxals. Acts on early glycation intermediates (hemithioacetals and aminocarbinols), preventing the formation of Schiff bases and advanced glycation endproducts (AGE). Also functions as a nucleotide deglycase able to repair glycated guanine in the free nucleotide pool (GTP, GDP, GMP, dGTP) and in DNA and RNA. Is thus involved in a major nucleotide repair system named guanine glycation repair (GG repair), dedicated to reversing methylglyoxal and glyoxal damage via nucleotide sanitization and direct nucleic acid repair. Plays an important role in protecting cells from carbonyl stress. This is Protein/nucleic acid deglycase HchA from Pseudomonas aeruginosa (strain LESB58).